A 185-amino-acid chain; its full sequence is Photosystem I assembly protein Ycf4 (185 aa).

The next 2 membrane-spanning stretches (helical) occupy residues 21–43 (NFFW…ISSY) and 63–85 (GVVM…CTIL).

This sequence belongs to the Ycf4 family.

It is found in the plastid. The protein resides in the chloroplast thylakoid membrane. Its function is as follows. Seems to be required for the assembly of the photosystem I complex. The sequence is that of Photosystem I assembly protein Ycf4 from Aegilops crassa (Persian goatgrass).